The following is a 233-amino-acid chain: Large ribosomal subunit protein uL1 (233 aa).

The protein belongs to the universal ribosomal protein uL1 family. Part of the 50S ribosomal subunit.

Binds directly to 23S rRNA. The L1 stalk is quite mobile in the ribosome, and is involved in E site tRNA release. Its function is as follows. Protein L1 is also a translational repressor protein, it controls the translation of the L11 operon by binding to its mRNA. The chain is Large ribosomal subunit protein uL1 from Deinococcus geothermalis (strain DSM 11300 / CIP 105573 / AG-3a).